A 232-amino-acid polypeptide reads, in one-letter code: Orotidine 5'-phosphate decarboxylase (232 aa).

Substrate-binding positions include aspartate 10, lysine 32, 59-68 (DLKFHDIPNT), threonine 119, arginine 180, glutamine 189, glycine 209, and arginine 210. The active-site Proton donor is lysine 61.

It belongs to the OMP decarboxylase family. Type 1 subfamily. In terms of assembly, homodimer.

The catalysed reaction is orotidine 5'-phosphate + H(+) = UMP + CO2. The protein operates within pyrimidine metabolism; UMP biosynthesis via de novo pathway; UMP from orotate: step 2/2. In terms of biological role, catalyzes the decarboxylation of orotidine 5'-monophosphate (OMP) to uridine 5'-monophosphate (UMP). The chain is Orotidine 5'-phosphate decarboxylase from Actinobacillus succinogenes (strain ATCC 55618 / DSM 22257 / CCUG 43843 / 130Z).